We begin with the raw amino-acid sequence, 246 residues long: N-alpha-acetyltransferase 11 (246 aa).

Positions 1–58 are interaction with NAA15; sequence MNIRNARPEDLMNMQHCNLLCLPENYQMKYYFYHGLSWPQLSYIAEDEDGKIVGYVLA. The 152-residue stretch at 1 to 152 folds into the N-acetyltransferase domain; that stretch reads MNIRNARPED…DAYAMKRDLA (152 aa). Positions 175–246 are disordered; the sequence is EENQEAQDST…DSSEYLDSTS (72 aa). Residues 230–246 show a composition bias toward polar residues; sequence SHSTDVQDSSEYLDSTS.

Belongs to the acetyltransferase family. ARD1 subfamily. Component of the N-terminal acetyltransferase A (NatA) complex composed of NAA11 and NAA15. Interacts with HIF1A.

Its subcellular location is the cytoplasm. The protein resides in the nucleus. The enzyme catalyses N-terminal glycyl-[protein] + acetyl-CoA = N-terminal N(alpha)-acetylglycyl-[protein] + CoA + H(+). It catalyses the reaction N-terminal L-alanyl-[protein] + acetyl-CoA = N-terminal N(alpha)-acetyl-L-alanyl-[protein] + CoA + H(+). It carries out the reaction N-terminal L-seryl-[protein] + acetyl-CoA = N-terminal N(alpha)-acetyl-L-seryl-[protein] + CoA + H(+). The catalysed reaction is N-terminal L-valyl-[protein] + acetyl-CoA = N-terminal N(alpha)-acetyl-L-valyl-[protein] + CoA + H(+). The enzyme catalyses N-terminal L-cysteinyl-[protein] + acetyl-CoA = N-terminal N(alpha)-acetyl-L-cysteinyl-[protein] + CoA + H(+). It catalyses the reaction N-terminal L-threonyl-[protein] + acetyl-CoA = N-terminal N(alpha)-acetyl-L-threonyl-[protein] + CoA + H(+). In terms of biological role, displays alpha (N-terminal) acetyltransferase activity. Proposed alternative catalytic subunit of the N-terminal acetyltransferase A (NatA) complex. The sequence is that of N-alpha-acetyltransferase 11 (Naa11) from Rattus norvegicus (Rat).